Reading from the N-terminus, the 407-residue chain is Geranylgeranyl diphosphate reductase (407 aa).

This sequence belongs to the geranylgeranyl reductase family. ChlP subfamily.

It carries out the reaction phytyl diphosphate + 3 NADP(+) = geranylgeranyl diphosphate + 3 NADPH + 3 H(+). Its pathway is porphyrin-containing compound metabolism; chlorophyll biosynthesis. Its function is as follows. Catalyzes the stepwise hydrogenation of geranylgeraniol to phytol during chlorophyll A (ChlA) biosynthesis. The polypeptide is Geranylgeranyl diphosphate reductase (chlP) (Synechocystis sp. (strain ATCC 27184 / PCC 6803 / Kazusa)).